A 235-amino-acid chain; its full sequence is CMP-N,N'-diacetyllegionaminic acid synthase (235 aa).

It belongs to the CMP-NeuNAc synthase family.

The enzyme catalyses N,N-diacetyllegionaminate + CTP = CMP-N,N-diacetyllegionaminate + diphosphate. Its function is as follows. Involved in biosynthesis of legionaminic acid (5,7-diamino-3,5,7,9-tetradeoxy-D-glycero-D-galacto-non-2-ulosonic acid)(Leg), a sialic acid-like derivative that is incorporated into flagellin via O-linkage to Ser/Thr. Catalyzes the conversion of N,N'-diacetyllegionaminic acid (Leg5Ac7Ac) and CTP into CMP-N,N'-diacetyllegionaminic acid (CMP-Leg5Ac7Ac). This chain is CMP-N,N'-diacetyllegionaminic acid synthase (legF), found in Campylobacter jejuni subsp. jejuni serotype O:2 (strain ATCC 700819 / NCTC 11168).